Here is a 282-residue protein sequence, read N- to C-terminus: Glutamate racemase (282 aa).

Substrate contacts are provided by residues 13–14 (DS) and 45–46 (YG). C76 (proton donor/acceptor) is an active-site residue. 77–78 (NT) is a substrate binding site. Residue C186 is the Proton donor/acceptor of the active site. Residue 187–188 (TH) coordinates substrate.

The protein belongs to the aspartate/glutamate racemases family.

It carries out the reaction L-glutamate = D-glutamate. It functions in the pathway cell wall biogenesis; peptidoglycan biosynthesis. Provides the (R)-glutamate required for cell wall biosynthesis. This Ralstonia pickettii (strain 12J) protein is Glutamate racemase.